Here is a 313-residue protein sequence, read N- to C-terminus: Mas-related G-protein coupled receptor member A4 (313 aa).

The Extracellular segment spans residues 1-25 (MAPTTTNPMNETIPGSIDIETLIPN). N-linked (GlcNAc...) asparagine glycosylation occurs at N10. Residues 26–46 (LMIIIFGLVGLTGNVILFWLL) traverse the membrane as a helical segment. Residues 47–54 (GFHLHRNA) are Cytoplasmic-facing. The helical transmembrane segment at 55-75 (FLVYILNLALADFLFLLCHII) threads the bilayer. An N-linked (GlcNAc...) asparagine glycan is attached at N76. Over 76 to 93 (NSTMLLLKVHLPNNILNH) the chain is Extracellular. A helical transmembrane segment spans residues 94–114 (CFDIIMTVLYITGLSMLSAIS). Topologically, residues 115–137 (TERCLSVLCPIWYRCRRPEHTST) are cytoplasmic. The chain crosses the membrane as a helical span at residues 138–158 (VLCAVIWFLPLLICILNGYFC). The Extracellular portion of the chain corresponds to 159–182 (HFFGPKYVIDSVCLATNFFIRTYP). Residues 183-203 (MFLFIVLCLSTLALLARLFCG) form a helical membrane-spanning segment. Residues 204–219 (AGKTKFTRLFVTIMLT) are Cytoplasmic-facing. Residues 220–240 (VLVFLLCGLPLGFFWFLVPWI) traverse the membrane as a helical segment. The Extracellular segment spans residues 241-255 (NRDFSVLDYILFQTS). Residues 256 to 276 (LVLTSVNSCANPIIYFFVGSF) traverse the membrane as a helical segment. Residues 277-313 (RHRLKHKTLKMVLQSALQDTPETPENMVEMSRSKAEP) are Cytoplasmic-facing.

The protein belongs to the G-protein coupled receptor 1 family. Mas subfamily. Expressed in a subset of sensory neurons that includes nociceptors. Expressed in the subclass of non-peptidergic sensory neurons that are IB4(+) and VR1(-).

The protein resides in the cell membrane. Functionally, orphan receptor. May be a receptor for RFamide-family neuropeptides such as NPFF and NPAF, which are analgesic in vivo. May regulate nociceptor function and/or development, including the sensation or modulation of pain. This is Mas-related G-protein coupled receptor member A4 (Mrgpra4) from Mus musculus (Mouse).